The chain runs to 314 residues: Bis(5'-nucleosyl)-tetraphosphatase, symmetrical (314 aa).

Residues 267–314 (QVPGNPITHPPKTAQRPRQPRRRQRQRGGDQAQTGPAPTPASTGPAGG) are disordered. Low complexity predominate over residues 297 to 314 (QAQTGPAPTPASTGPAGG).

This sequence belongs to the Ap4A hydrolase family.

The enzyme catalyses P(1),P(4)-bis(5'-adenosyl) tetraphosphate + H2O = 2 ADP + 2 H(+). In terms of biological role, hydrolyzes diadenosine 5',5'''-P1,P4-tetraphosphate to yield ADP. This Xanthomonas axonopodis pv. citri (strain 306) protein is Bis(5'-nucleosyl)-tetraphosphatase, symmetrical.